We begin with the raw amino-acid sequence, 1159 residues long: EPNMDALIIPVTMEVPCDSRGQRMWWAFLASSMVTFFGGLFIILLWRTLKYLWTVCCHCGDKTKEAQKINNGSSQADGTLKPVDEKEEAVAAEVGWMTSVKDWAGVMISAQTLTGRVLVVLVFALSIGALVIYFIDSSNPIESCQNFYKDFTLQIDMAFNVFFLLYFGLRFIAANDNLWFWLEVNSVVDFFTVPPVFVSVYLNRSWLGLRFLRALRLIQFSEILQFLNILKTSNSIKLVNLLSIFISTWLTAAGFIHLVENSGDPWENFQNSQALTYWECVYLLMVTMSTVGYGDVYAKTTPGGLFIVFFILGGLAMFASYVPEIIEIIGNRKKYGGSYSAVSGRKHIVVCGHITLESVSHFLKDFLHKDRDDVNVEIVFLHNISPNLELEALFKRHFTQVEFYQGSVLNPHDLARVKIESADACLILANKYCDDPDAEDASNIMRVISIKNYHPKIRIITQMLQYHNKAHLLNIPSWNWKEGDDAICLAELRLGFIAQSCLAQGLSTMLANLFSIGSFIKIEEDTWHKYYLEGVSNEMYTEYLSSAFVGLSFPTVCELCFVKLKLLMIAIEYKSANRESRILINPGNHLKIQEGTSGFFIASDAKEVKRAFFYCKACHNDITDPKRIKKCGCKRLEDEQPSTLSPKKKQRNGGMRNSPSSSPKLMRHDPLLIPGNDQIDNMDSNVKKYDSTGMFHWCAPKEIEKVISTRSEAAMTVLSGHVVVCIFGHVSSALIGLRNLVMPLRASNFHYHELKHIVFVGSIEYLKREWETLHNFPKVSILPGTPLTRADLRAVNINLCDMCVILSANQNNIDDTSLQDKECILASLNIKSMQFDDSIGVLQANSQGFTPPGMDKSSPDNSPVHGMLRQPSITTGVNIPIITELVNDTNVQFLDQDDDDDPDTELYLTQPFACGTAFAVSVLDSLMSATYFNDNILTLIRTLVTGGATPELEALIAEENALRGGYSTPQTLANRDRCRVAQLALLDGPFADLGDGGCYGDLFCKALKTYNMLCFGIYRLRDAHLSTPSQCTKRYVITNPPYRFELVPTDLIFCLMQFDHNAGQSRASLSHSSHSSQSSSKKSSSVHSIPSTANRQNRPKSRESRDKQTEKKWFTDEPDNAYPRNIQIEPMSTHMANQINQYKSTSSLIPPIREVEDEC.

The Extracellular portion of the chain corresponds to 1-24 (EPNMDALIIPVTMEVPCDSRGQRM). The chain crosses the membrane as a helical span at residues 25-45 (WWAFLASSMVTFFGGLFIILL). Over 46–116 (WRTLKYLWTV…MISAQTLTGR (71 aa)) the chain is Cytoplasmic. S-palmitoyl cysteine attachment occurs at residues Cys-56, Cys-57, and Cys-59. The chain crosses the membrane as a helical span at residues 117 to 137 (VLVVLVFALSIGALVIYFIDS). Residues 138–152 (SNPIESCQNFYKDFT) are Extracellular-facing. A helical transmembrane segment spans residues 153–173 (LQIDMAFNVFFLLYFGLRFIA). Topologically, residues 174 to 177 (ANDN) are cytoplasmic. A helical membrane pass occupies residues 178-198 (LWFWLEVNSVVDFFTVPPVFV). At 199–202 (SVYL) the chain is on the extracellular side. A helical; Voltage-sensor membrane pass occupies residues 203-223 (NRSWLGLRFLRALRLIQFSEI). Over 224-238 (LQFLNILKTSNSIKL) the chain is Cytoplasmic. Residues 239 to 259 (VNLLSIFISTWLTAAGFIHLV) traverse the membrane as a helical segment. At 260 to 273 (ENSGDPWENFQNSQ) the chain is on the extracellular side. The segment at residues 274 to 296 (ALTYWECVYLLMVTMSTVGYGDV) is an intramembrane region (pore-forming). Positions 290–293 (TVGY) match the Selectivity for potassium motif. Residues 297-305 (YAKTTPGGL) lie on the Extracellular side of the membrane. The chain crosses the membrane as a helical span at residues 306-326 (FIVFFILGGLAMFASYVPEII). Topologically, residues 327 to 1159 (EIIGNRKKYG…PPIREVEDEC (833 aa)) are cytoplasmic. The 143-residue stretch at 345 to 487 (RKHIVVCGHI…WNWKEGDDAI (143 aa)) folds into the RCK N-terminal 1 domain. Mg(2+) contacts are provided by Glu-377, Gln-400, and Glu-402. Positions 494 to 514 (LGFIAQSCLAQGLSTMLANLF) are segment S7. Residues 551-571 (LSFPTVCELCFVKLKLLMIAI) are segment S8. Residues 615-619 (CKACH) form a heme-binding motif region. Positions 639–668 (EQPSTLSPKKKQRNGGMRNSPSSSPKLMRH) are disordered. Position 643 is a phosphothreonine (Thr-643). A phosphoserine mark is found at Ser-645, Ser-658, and Ser-662. Residues 717-737 (VLSGHVVVCIFGHVSSALIGL) form a segment S9 region. The region spanning 719 to 863 (SGHVVVCIFG…MDKSSPDNSP (145 aa)) is the RCK N-terminal 2 domain. At Thr-850 the chain carries Phosphothreonine. Phosphoserine occurs at positions 858 and 862. Residues 883 to 905 (TELVNDTNVQFLDQDDDDDPDTE) carry the Calcium bowl motif. The Ca(2+) site is built by Gln-892, Asp-895, Asp-898, and Asp-900. Positions 912-932 (FACGTAFAVSVLDSLMSATYF) are segment S10. Over residues 1066–1091 (RASLSHSSHSSQSSSKKSSSVHSIPS) the composition is skewed to low complexity. Positions 1066–1124 (RASLSHSSHSSQSSSKKSSSVHSIPSTANRQNRPKSRESRDKQTEKKWFTDEPDNAYPR) are disordered. Residues 1100–1115 (KSRESRDKQTEKKWFT) show a composition bias toward basic and acidic residues. Phosphoserine is present on residues Ser-1101 and Ser-1104.

This sequence belongs to the potassium channel family. Calcium-activated (TC 1.A.1.3) subfamily. KCa1.1/KCNMA1 sub-subfamily. As to quaternary structure, homotetramer; which constitutes the calcium-activated potassium channel. Interacts with beta subunits KCNMB1, KCNMB2, KCNMB3 and KCNMB4. Interacts with gamma subunits LRRC26, LRRC38, LRRC52 and LRRC55. Beta and gamma subunits are accessory, and modulate its activity. Interacts with RAB11B. In terms of processing, phosphorylated. Phosphorylation by kinases such as PKA and/or PKG. In smooth muscles, phosphorylation affects its activity. Post-translationally, palmitoylation by ZDHHC22 and ZDHHC23 within the intracellular linker between the S0 and S1 transmembrane domains regulates localization to the plasma membrane. Depalmitoylated by LYPLA1 and LYPLAL1, leading to retard exit from the trans-Golgi network. As to expression, expressed in all vascular and smooth muscles.

It is found in the cell membrane. The enzyme catalyses K(+)(in) = K(+)(out). With respect to regulation, ethanol and carbon monoxide-bound heme increase channel activation. Heme inhibits channel activation. Functionally, potassium channel activated by both membrane depolarization or increase in cytosolic Ca(2+) that mediates export of K(+). It is also activated by the concentration of cytosolic Mg(2+). Its activation dampens the excitatory events that elevate the cytosolic Ca(2+) concentration and/or depolarize the cell membrane. It therefore contributes to repolarization of the membrane potential. Plays a key role in controlling excitability in a number of systems, such as regulation of the contraction of smooth muscle, the tuning of hair cells in the cochlea, regulation of transmitter release, and innate immunity. In smooth muscles, its activation by high level of Ca(2+), caused by ryanodine receptors in the sarcoplasmic reticulum, regulates the membrane potential. In cochlea cells, its number and kinetic properties partly determine the characteristic frequency of each hair cell and thereby helps to establish a tonotopic map. Kinetics of KCNMA1 channels are determined by alternative splicing, phosphorylation status and its combination with modulating beta subunits. Highly sensitive to both iberiotoxin (IbTx) and charybdotoxin (CTX). The chain is Calcium-activated potassium channel subunit alpha-1 (KCNMA1) from Canis lupus familiaris (Dog).